The primary structure comprises 256 residues: Triosephosphate isomerase (256 aa).

Residue 9–11 (NWK) coordinates substrate. Histidine 96 (electrophile) is an active-site residue. The Proton acceptor role is filled by glutamate 168. Substrate contacts are provided by residues serine 213 and 234–235 (GG).

This sequence belongs to the triosephosphate isomerase family. As to quaternary structure, homodimer.

The protein localises to the cytoplasm. It catalyses the reaction D-glyceraldehyde 3-phosphate = dihydroxyacetone phosphate. It functions in the pathway carbohydrate biosynthesis; gluconeogenesis. Its pathway is carbohydrate degradation; glycolysis; D-glyceraldehyde 3-phosphate from glycerone phosphate: step 1/1. Functionally, involved in the gluconeogenesis. Catalyzes stereospecifically the conversion of dihydroxyacetone phosphate (DHAP) to D-glyceraldehyde-3-phosphate (G3P). This Baumannia cicadellinicola subsp. Homalodisca coagulata protein is Triosephosphate isomerase.